The chain runs to 123 residues: Small ribosomal subunit protein uS12 (123 aa).

Aspartate 89 is modified (3-methylthioaspartic acid).

Belongs to the universal ribosomal protein uS12 family. In terms of assembly, part of the 30S ribosomal subunit. Contacts proteins S8 and S17. May interact with IF1 in the 30S initiation complex.

With S4 and S5 plays an important role in translational accuracy. Functionally, interacts with and stabilizes bases of the 16S rRNA that are involved in tRNA selection in the A site and with the mRNA backbone. Located at the interface of the 30S and 50S subunits, it traverses the body of the 30S subunit contacting proteins on the other side and probably holding the rRNA structure together. The combined cluster of proteins S8, S12 and S17 appears to hold together the shoulder and platform of the 30S subunit. The polypeptide is Small ribosomal subunit protein uS12 (Prochlorococcus marinus (strain MIT 9211)).